Consider the following 449-residue polypeptide: 23S rRNA (uracil(1939)-C(5))-methyltransferase RlmD (449 aa).

The region spanning Lys15–Arg73 is the TRAM domain. [4Fe-4S] cluster contacts are provided by Cys86, Cys92, Cys95, and Cys173. The S-adenosyl-L-methionine site is built by Gln276, Phe305, Asn310, Glu326, Asn353, and Asp374. Cys400 (nucleophile) is an active-site residue.

This sequence belongs to the class I-like SAM-binding methyltransferase superfamily. RNA M5U methyltransferase family. RlmD subfamily.

It carries out the reaction uridine(1939) in 23S rRNA + S-adenosyl-L-methionine = 5-methyluridine(1939) in 23S rRNA + S-adenosyl-L-homocysteine + H(+). Its function is as follows. Catalyzes the formation of 5-methyl-uridine at position 1939 (m5U1939) in 23S rRNA. This Pectobacterium carotovorum subsp. carotovorum (strain PC1) protein is 23S rRNA (uracil(1939)-C(5))-methyltransferase RlmD.